An 846-amino-acid polypeptide reads, in one-letter code: uncharacterized protein (846 aa).

WD repeat units lie at residues 88-129 (TKHI…LLYD), 132-172 (EHSR…STIT), 175-215 (GNSE…LPFL), 219-258 (AHNG…KKSL), 262-309 (NNVS…IPYR), and 313-348 (CHDS…NAFN). The disordered stretch occupies residues 541–560 (PREASTPSESSNSSIESEDN). Positions 544-555 (ASTPSESSNSSI) are enriched in low complexity. One copy of the WD 7 repeat lies at 624-663 (FHRSSVTSASIKSREAVLSAGNSSRRASIFLDQLSLHGDT).

This is an uncharacterized protein from Schizosaccharomyces pombe (strain 972 / ATCC 24843) (Fission yeast).